The sequence spans 185 residues: Putative manganese efflux pump MntP (185 aa).

Helical transmembrane passes span 4–24 (LLLSSLVIAVGLAMDSFSVSL), 43–63 (IFFGFFQFAMPLLGWGIGVPI), 67–87 (IDPFGYWIVVGLFFFIGGKMI), 107–127 (LLLAVATSIDALAVGISFALI), 131–151 (VLLPAVIIGVVAFLFSFFGVL), and 165–185 (QILGGVILVLIGIKFLIEYCL).

The protein belongs to the MntP (TC 9.B.29) family.

It is found in the cell membrane. Probably functions as a manganese efflux pump. This chain is Putative manganese efflux pump MntP, found in Methanocorpusculum labreanum (strain ATCC 43576 / DSM 4855 / Z).